A 742-amino-acid polypeptide reads, in one-letter code: MAGRYGSQVMTMTVTNTPSADLAFTNLAYCSSSDLRQFSVPGSDLFLANVADSFILSLCGHGSIRDGNIALNAIQRRHARVSTGDMVSVSRFVPPENFDLAMLTLELEFVKKGTKSEQVDAALLSTQLKRKYTNQVLTVGQKATFEYHGTNYILTVNRADVEGQDHTNGIERGLLSKDTYIVFEASNASGIKIVNQREAASSNIFKHKEFNLESLGIGGLGAEFADIFRRAFASRVFPPHVTSRLGIKHVKGMLLFGPPGTGKTLMARQIGKMLNGKDPKIVNGPEVLSKFVGETEKNVRDLFADAEQDQRTLGDASELHVIIFDEIDAICKSRGSTRDGTGVHDSIVNQLLTKIDGVEALNNVLLIGMTNRKDLLDEALLRPGRLEVQVEISLPDEAGRLQILQIHTNKMKENSFLGTDINLQELAARTKNYSGAELEGVVKSATSYALNRQLSMDDLTKPVEEENIKITMEDFLHAIYEVQPAFGASTDDLERCRLNGMVDCGHRHNHIYKRAMLLVEQVKVSTRSPLVTCLLEGPSGSGKTALAATIGIDSDFPYVKIVSAETMIGLSESTKCAHIVKVFEDAYKSPMSIIILDDIERLLEFIAIGPRFSNIISQTLMVLLKRLPPKGKKLLVFGTTSEVTFLESVGISDCFSVTHSVPTLQKEDAKKVLNQLNLFSEDDVDSAAEALNDMPIKKIYMLIEMAAQGENGGSAEAIYAGREKININHFYDCLGDFIRFTG.

ATP is bound by residues 499 to 504 and 539 to 546; these read NGMVDC and SGSGKTAL. Threonine 544 contacts Mg(2+).

It belongs to the AAA ATPase family. In terms of assembly, homohexamer. Binds to SNARE-SNAP complexes to form 20S particles. The cofactor is Mg(2+).

It localises to the cytoplasm. The enzyme catalyses ATP + H2O = ADP + phosphate + H(+). In terms of biological role, required for vesicle-mediated transport. Catalyzes the fusion of transport vesicles within the Golgi cisternae. Is also required for transport from the endoplasmic reticulum to the Golgi stack. Seems to function as a fusion protein required for the delivery of cargo proteins to all compartments of the Golgi stack independent of vesicle origin. Required for maintaining the normal morphology of the Golgi apparatus. This is Vesicle-fusing ATPase from Arabidopsis thaliana (Mouse-ear cress).